The chain runs to 303 residues: Diaminopimelate epimerase (303 aa).

Positions 15 and 72 each coordinate substrate. Catalysis depends on C81, which acts as the Proton donor. Substrate-binding positions include G82 to N83, N169, N202, and E220 to R221. Catalysis depends on C229, which acts as the Proton acceptor. G230 to T231 is a binding site for substrate.

Belongs to the diaminopimelate epimerase family. As to quaternary structure, homodimer.

It is found in the cytoplasm. The catalysed reaction is (2S,6S)-2,6-diaminopimelate = meso-2,6-diaminopimelate. It functions in the pathway amino-acid biosynthesis; L-lysine biosynthesis via DAP pathway; DL-2,6-diaminopimelate from LL-2,6-diaminopimelate: step 1/1. Catalyzes the stereoinversion of LL-2,6-diaminopimelate (L,L-DAP) to meso-diaminopimelate (meso-DAP), a precursor of L-lysine and an essential component of the bacterial peptidoglycan. This is Diaminopimelate epimerase from Prochlorococcus marinus (strain MIT 9313).